The primary structure comprises 309 residues: Ribosomal RNA large subunit methyltransferase F (309 aa).

Positions 1–21 (MASQHDKKSVQSGLLHPRNPH) are disordered.

Belongs to the methyltransferase superfamily. METTL16/RlmF family.

It is found in the cytoplasm. It carries out the reaction adenosine(1618) in 23S rRNA + S-adenosyl-L-methionine = N(6)-methyladenosine(1618) in 23S rRNA + S-adenosyl-L-homocysteine + H(+). Its function is as follows. Specifically methylates the adenine in position 1618 of 23S rRNA. The chain is Ribosomal RNA large subunit methyltransferase F from Desulfotalea psychrophila (strain LSv54 / DSM 12343).